We begin with the raw amino-acid sequence, 264 residues long: 3-methyl-2-oxobutanoate hydroxymethyltransferase (264 aa).

The Mg(2+) site is built by aspartate 45 and aspartate 84. Residues 45–46 (DS), aspartate 84, and lysine 112 each bind 3-methyl-2-oxobutanoate. Glutamate 114 is a binding site for Mg(2+). Glutamate 181 acts as the Proton acceptor in catalysis.

It belongs to the PanB family. Homodecamer; pentamer of dimers. Requires Mg(2+) as cofactor.

It is found in the cytoplasm. It carries out the reaction 3-methyl-2-oxobutanoate + (6R)-5,10-methylene-5,6,7,8-tetrahydrofolate + H2O = 2-dehydropantoate + (6S)-5,6,7,8-tetrahydrofolate. It functions in the pathway cofactor biosynthesis; (R)-pantothenate biosynthesis; (R)-pantoate from 3-methyl-2-oxobutanoate: step 1/2. Its function is as follows. Catalyzes the reversible reaction in which hydroxymethyl group from 5,10-methylenetetrahydrofolate is transferred onto alpha-ketoisovalerate to form ketopantoate. The polypeptide is 3-methyl-2-oxobutanoate hydroxymethyltransferase (Shigella sonnei (strain Ss046)).